Here is a 308-residue protein sequence, read N- to C-terminus: Methionyl-tRNA formyltransferase (308 aa).

Residue Ser109–Pro112 coordinates (6S)-5,6,7,8-tetrahydrofolate.

This sequence belongs to the Fmt family.

It carries out the reaction L-methionyl-tRNA(fMet) + (6R)-10-formyltetrahydrofolate = N-formyl-L-methionyl-tRNA(fMet) + (6S)-5,6,7,8-tetrahydrofolate + H(+). Functionally, attaches a formyl group to the free amino group of methionyl-tRNA(fMet). The formyl group appears to play a dual role in the initiator identity of N-formylmethionyl-tRNA by promoting its recognition by IF2 and preventing the misappropriation of this tRNA by the elongation apparatus. The protein is Methionyl-tRNA formyltransferase of Methylobacillus flagellatus (strain ATCC 51484 / DSM 6875 / VKM B-1610 / KT).